A 201-amino-acid polypeptide reads, in one-letter code: Peroxiredoxin-2F, mitochondrial (201 aa).

A mitochondrion-targeting transit peptide spans 1–30 (MAMSILKLRNLSALRSAANSARIGVSSRGF). At T37 the chain carries Phosphothreonine. The Thioredoxin domain maps to 37 to 201 (TDITSAAPGV…TGAEVILGQI (165 aa)). C89 serves as the catalytic Cysteine sulfenic acid (-SOH) intermediate. S149 carries the phosphoserine modification.

Belongs to the peroxiredoxin family. Prx5 subfamily. As to quaternary structure, monomer. As to expression, expressed in the whole plant.

Its subcellular location is the mitochondrion matrix. It catalyses the reaction [glutaredoxin]-dithiol + a hydroperoxide = [glutaredoxin]-disulfide + an alcohol + H2O. Its function is as follows. Thiol-specific peroxidase that catalyzes the reduction of hydrogen peroxide and organic hydroperoxides to water and alcohols, respectively. Plays a role in cell protection against oxidative stress by detoxifying peroxides. Reduces preferentially hydrogen peroxide rather than alkyl peroxides. May be involved in mitochondrial redox homeostasis. This is Peroxiredoxin-2F, mitochondrial (PRXIIF) from Arabidopsis thaliana (Mouse-ear cress).